The following is a 301-amino-acid chain: tRNA dimethylallyltransferase (301 aa).

Residue 9–16 (GPTASGKS) participates in ATP binding. 11-16 (TASGKS) serves as a coordination point for substrate. The tract at residues 34 to 37 (DSMQ) is interaction with substrate tRNA.

Belongs to the IPP transferase family. In terms of assembly, monomer. It depends on Mg(2+) as a cofactor.

The catalysed reaction is adenosine(37) in tRNA + dimethylallyl diphosphate = N(6)-dimethylallyladenosine(37) in tRNA + diphosphate. In terms of biological role, catalyzes the transfer of a dimethylallyl group onto the adenine at position 37 in tRNAs that read codons beginning with uridine, leading to the formation of N6-(dimethylallyl)adenosine (i(6)A). The protein is tRNA dimethylallyltransferase of Corynebacterium efficiens (strain DSM 44549 / YS-314 / AJ 12310 / JCM 11189 / NBRC 100395).